Consider the following 65-residue polypeptide: Beta-defensin 17 (65 aa).

The N-terminal stretch at 1–19 (MKFHLLFFILLFSITILTG) is a signal peptide. Disulfide bonds link Cys-35/Cys-63, Cys-42/Cys-56, and Cys-46/Cys-64.

The protein belongs to the beta-defensin family.

It localises to the secreted. Has antibacterial activity. The protein is Beta-defensin 17 (Defb17) of Rattus norvegicus (Rat).